The following is a 369-amino-acid chain: Aminomethyltransferase (369 aa).

This sequence belongs to the GcvT family. In terms of assembly, the glycine cleavage system is composed of four proteins: P, T, L and H.

The catalysed reaction is N(6)-[(R)-S(8)-aminomethyldihydrolipoyl]-L-lysyl-[protein] + (6S)-5,6,7,8-tetrahydrofolate = N(6)-[(R)-dihydrolipoyl]-L-lysyl-[protein] + (6R)-5,10-methylene-5,6,7,8-tetrahydrofolate + NH4(+). The glycine cleavage system catalyzes the degradation of glycine. The polypeptide is Aminomethyltransferase (Alkaliphilus metalliredigens (strain QYMF)).